The sequence spans 126 residues: Large ribosomal subunit protein uL22c (126 aa).

The protein belongs to the universal ribosomal protein uL22 family. Part of the 50S ribosomal subunit.

The protein localises to the plastid. It is found in the chloroplast. This protein binds specifically to 23S rRNA. Its function is as follows. The globular domain of the protein is located near the polypeptide exit tunnel on the outside of the subunit, while an extended beta-hairpin is found that lines the wall of the exit tunnel in the center of the 70S ribosome. This chain is Large ribosomal subunit protein uL22c (rpl22), found in Cryptomeria japonica (Japanese cedar).